Consider the following 91-residue polypeptide: Small ribosomal subunit protein uS19c (91 aa).

It belongs to the universal ribosomal protein uS19 family.

The protein localises to the plastid. The protein resides in the organellar chromatophore. Protein S19 forms a complex with S13 that binds strongly to the 16S ribosomal RNA. This is Small ribosomal subunit protein uS19c from Paulinella chromatophora.